A 299-amino-acid chain; its full sequence is Inosose dehydratase (299 aa).

This sequence belongs to the IolE/MocC family. It depends on glutathione as a cofactor. The cofactor is Co(2+). Mn(2+) is required as a cofactor.

The catalysed reaction is scyllo-inosose = 3D-3,5/4-trihydroxycyclohexane-1,2-dione + H2O. Its function is as follows. Catalyzes the dehydration of inosose (2-keto-myo-inositol, 2KMI or 2,4,6/3,5-pentahydroxycyclohexanone) to 3D-(3,5/4)-trihydroxycyclohexane-1,2-dione (D-2,3-diketo-4-deoxy-epi-inositol). The chain is Inosose dehydratase from Klebsiella pneumoniae (strain 342).